The following is a 500-amino-acid chain: NAD(P)H-quinone oxidoreductase chain 4, chloroplastic (500 aa).

14 helical membrane passes run 4 to 24, 31 to 51, 84 to 104, 111 to 129, 134 to 154, 167 to 187, 208 to 228, 242 to 262, 272 to 292, 305 to 325, 330 to 350, 386 to 406, 416 to 436, and 463 to 483; these read FPWL…IFLF, VIKW…TYAF, GFSL…TLAA, SRLF…IGLF, LLLF…LLSM, FILY…GIAL, ALEI…SPII, HYST…YGLV, AHSI…IYAA, IAYS…SISD, GAIL…FLAG, LALP…GIIT, ILIT…LLSM, and FVSI…DFVF.

The protein belongs to the complex I subunit 4 family.

It localises to the plastid. The protein localises to the chloroplast thylakoid membrane. It catalyses the reaction a plastoquinone + NADH + (n+1) H(+)(in) = a plastoquinol + NAD(+) + n H(+)(out). The enzyme catalyses a plastoquinone + NADPH + (n+1) H(+)(in) = a plastoquinol + NADP(+) + n H(+)(out). This is NAD(P)H-quinone oxidoreductase chain 4, chloroplastic from Manihot esculenta (Cassava).